A 269-amino-acid polypeptide reads, in one-letter code: Chymotrypsin-like elastase family member 3B (269 aa).

An N-terminal signal peptide occupies residues 1 to 16 (MLRLLSSLLLVALASG). The propeptide at 17 to 27 (CGQPSHNPSSR) is activation peptide. The Peptidase S1 domain maps to 28 to 267 (VVNGEEAVPH…FIDWIEETIA (240 aa)). Cys-57 and Cys-73 are oxidised to a cystine. Catalysis depends on charge relay system residues His-72 and Asp-122. Cystine bridges form between Cys-156–Cys-222, Cys-187–Cys-203, and Cys-212–Cys-243. The active-site Charge relay system is Ser-216.

This sequence belongs to the peptidase S1 family. Elastase subfamily.

It catalyses the reaction Preferential cleavage: Ala-|-Xaa. Does not hydrolyze elastin.. Efficient protease with alanine specificity but only little elastolytic activity. In Mus musculus (Mouse), this protein is Chymotrypsin-like elastase family member 3B (Cela3b).